Here is a 231-residue protein sequence, read N- to C-terminus: 26S proteasome non-ATPase regulatory subunit 10 (231 aa).

7 ANK repeats span residues 3-36 (GCVS…ATRT), 37-69 (DQDS…VNDK), 70-102 (DDAG…VNAV), 103-135 (NQNG…PDAK), 136-168 (DHYD…TNIQ), 169-201 (DTEG…IYIE), and 202-226 (NKEE…LAES).

In terms of assembly, part of transient complex containing PSMD10, PSMC4, PSMC5 and PAAF1 formed during the assembly of the 26S proteasome. Stays associated throughout the assembly of the PA700/19S RC and is released upon association with the 20S core. Interacts with PSMC4. Interacts with RB1. Interacts with CDK4. Interacts with MDM2. Interacts with RELA. Associates with a CDK4:CCND2 serine/threonine kinase complex. Interacts with ARHGDIA and increases the interaction between ARHGDIA and RHOA, hence promotes ARHGDIA inactivation of RHOA and ROCK.

It localises to the cytoplasm. It is found in the nucleus. Functionally, acts as a chaperone during the assembly of the 26S proteasome, specifically of the PA700/19S regulatory complex (RC). In the initial step of the base subcomplex assembly is part of an intermediate PSMD10:PSMC4:PSMC5:PAAF1 module which probably assembles with a PSMD5:PSMC2:PSMC1:PSMD2 module. Independently of the proteasome, regulates EGF-induced AKT activation through inhibition of the RHOA/ROCK/PTEN pathway, leading to prolonged AKT activation. Plays an important role in RAS-induced tumorigenesis. Its function is as follows. Acts as an oncoprotein by being involved in negative regulation of tumor suppressors RB1 and p53/TP53. Overexpression is leading to phosphorylation of RB1 and proteasomal degradation of RB1. Regulates CDK4-mediated phosphorylation of RB1 by competing with CDKN2A for binding with CDK4. Facilitates binding of MDM2 to p53/TP53 and the mono- and polyubiquitination of p53/TP53 by MDM2 suggesting a function in targeting the TP53:MDM2 complex to the 26S proteasome. Involved in p53-independent apoptosis. Involved in regulation of NF-kappa-B by retaining it in the cytoplasm. Binds to the NF-kappa-B component RELA and accelerates its XPO1/CRM1-mediated nuclear export. In Mus musculus (Mouse), this protein is 26S proteasome non-ATPase regulatory subunit 10 (Psmd10).